The following is an 855-amino-acid chain: Leucine--tRNA ligase (855 aa).

A 'HIGH' region motif is present at residues 42 to 52; the sequence is PYPSGSLHVGH. The tract at residues 292-311 is disordered; it reads SEMDRTAEDKPKKGIPTGGK. The segment covering 293-303 has biased composition (basic and acidic residues); the sequence is EMDRTAEDKPK. The 'KMSKS' region signature appears at 614–618; sequence KMSKS. Lys617 contributes to the ATP binding site.

Belongs to the class-I aminoacyl-tRNA synthetase family.

The protein resides in the cytoplasm. The enzyme catalyses tRNA(Leu) + L-leucine + ATP = L-leucyl-tRNA(Leu) + AMP + diphosphate. The protein is Leucine--tRNA ligase of Acaryochloris marina (strain MBIC 11017).